The following is a 229-amino-acid chain: PKHD-type hydroxylase Nham_1514 (229 aa).

The Fe2OG dioxygenase domain maps to 78–180 (QIFPPLFNRY…RVASFFWLQS (103 aa)). The Fe cation site is built by H98, D100, and H161. R171 is a 2-oxoglutarate binding site.

Fe(2+) serves as cofactor. The cofactor is L-ascorbate.

The chain is PKHD-type hydroxylase Nham_1514 from Nitrobacter hamburgensis (strain DSM 10229 / NCIMB 13809 / X14).